The following is a 226-amino-acid chain: MNENLFAPFMIPVMLGIPITTLIIILPSILFPAPNRLINNRTISIQQWLTKLTSKQLMSVHSPKGQTWSLMLISLFLFIASTNLLGMLPHSFTPTTQLSMNVGMAIPLWAGTVATGFRNKTKMSLAHLLPQGTPTFLIPMLVIIETISLFIQPVALAVRLTANITAGHLLMHLIGETTLVLMSTSLFTAIITFTILALLTILEFRVALIQAYVFTLLVSLYLHDNT.

Transmembrane regions (helical) follow at residues 5-25 (LFAP…LIII), 68-88 (WSLM…LGML), 97-117 (QLSM…ATGF), 136-156 (FLIP…PVAL), 179-199 (LVLM…LALL), and 201-221 (ILEF…VSLY).

It belongs to the ATPase A chain family. As to quaternary structure, component of the ATP synthase complex composed at least of ATP5F1A/subunit alpha, ATP5F1B/subunit beta, ATP5MC1/subunit c (homooctomer), MT-ATP6/subunit a, MT-ATP8/subunit 8, ATP5ME/subunit e, ATP5MF/subunit f, ATP5MG/subunit g, ATP5MK/subunit k, ATP5MJ/subunit j, ATP5F1C/subunit gamma, ATP5F1D/subunit delta, ATP5F1E/subunit epsilon, ATP5PF/subunit F6, ATP5PB/subunit b, ATP5PD/subunit d, ATP5PO/subunit OSCP. ATP synthase complex consists of a soluble F(1) head domain (subunits alpha(3) and beta(3)) - the catalytic core - and a membrane F(0) domain - the membrane proton channel (subunits c, a, 8, e, f, g, k and j). These two domains are linked by a central stalk (subunits gamma, delta, and epsilon) rotating inside the F1 region and a stationary peripheral stalk (subunits F6, b, d, and OSCP). Interacts with DNAJC30; interaction is direct.

The protein resides in the mitochondrion inner membrane. The enzyme catalyses H(+)(in) = H(+)(out). Its function is as follows. Subunit a, of the mitochondrial membrane ATP synthase complex (F(1)F(0) ATP synthase or Complex V) that produces ATP from ADP in the presence of a proton gradient across the membrane which is generated by electron transport complexes of the respiratory chain. ATP synthase complex consist of a soluble F(1) head domain - the catalytic core - and a membrane F(1) domain - the membrane proton channel. These two domains are linked by a central stalk rotating inside the F(1) region and a stationary peripheral stalk. During catalysis, ATP synthesis in the catalytic domain of F(1) is coupled via a rotary mechanism of the central stalk subunits to proton translocation. With the subunit c (ATP5MC1), forms the proton-conducting channel in the F(0) domain, that contains two crucial half-channels (inlet and outlet) that facilitate proton movement from the mitochondrial intermembrane space (IMS) into the matrix. Protons are taken up via the inlet half-channel and released through the outlet half-channel, following a Grotthuss mechanism. The polypeptide is ATP synthase F(0) complex subunit a (Balaenoptera musculus (Blue whale)).